The sequence spans 109 residues: B melanoma antigen 2 (109 aa).

Residues 1–17 (MAAGVVFLALSAQLLQA) form the signal peptide.

The protein belongs to the BAGE family. In terms of tissue distribution, not expressed in normal tissues except in testis. Expressed in 22% of melanomas, in bladder and lung carcinomas.

It is found in the secreted. Functionally, unknown. Candidate gene encoding tumor antigens. The protein is B melanoma antigen 2 (BAGE2) of Homo sapiens (Human).